An 88-amino-acid polypeptide reads, in one-letter code: Molybdopterin synthase sulfur carrier subunit (88 aa).

Glycine 88 bears the 1-thioglycine; alternate mark. Glycine 88 is modified (glycyl adenylate; alternate).

It belongs to the MoaD family. MOCS2A subfamily. As to quaternary structure, heterotetramer; composed of 2 small (MOCS2A) and 2 large (MOCS2B) subunits. In terms of processing, C-terminal thiocarboxylation occurs in 2 steps, it is first acyl-adenylated (-COAMP) via the hesA/moeB/thiF part of MOCS3, then thiocarboxylated (-COSH) via the rhodanese domain of MOCS3.

The protein resides in the cytoplasm. The protein localises to the cytosol. It participates in cofactor biosynthesis; molybdopterin biosynthesis. Its function is as follows. Acts as a sulfur carrier required for molybdopterin biosynthesis. Component of the molybdopterin synthase complex that catalyzes the conversion of precursor Z into molybdopterin by mediating the incorporation of 2 sulfur atoms into precursor Z to generate a dithiolene group. In the complex, serves as sulfur donor by being thiocarboxylated (-COSH) at its C-terminus by MOCS3. After interaction with MOCS2B, the sulfur is then transferred to precursor Z to form molybdopterin. This is Molybdopterin synthase sulfur carrier subunit from Mus musculus (Mouse).